The primary structure comprises 184 residues: Photosystem I assembly protein Ycf4 (184 aa).

2 helical membrane-spanning segments follow: residues Asn21 to Tyr43 and Leu58 to Ser78.

The protein belongs to the Ycf4 family.

Its subcellular location is the plastid. It is found in the chloroplast thylakoid membrane. Functionally, seems to be required for the assembly of the photosystem I complex. This Pinus thunbergii (Japanese black pine) protein is Photosystem I assembly protein Ycf4.